The sequence spans 103 residues: Sec-independent protein translocase protein TatA (103 aa).

The helical transmembrane segment at 1–21 (MSLGPWEIAIIVLLIIVLFGA) threads the bilayer. Residues 42–103 (VKEMQKDDET…QNYEDPNRTP (62 aa)) form a disordered region. Low complexity predominate over residues 52–90 (PAQPEQQPQGYQHPQQIEAPQNLQQPNFQQHYQNQPQQP). Residues 94–103 (QNYEDPNRTP) show a composition bias toward basic and acidic residues.

The protein belongs to the TatA/E family. The Tat system comprises two distinct complexes: a TatABC complex, containing multiple copies of TatA, TatB and TatC subunits, and a separate TatA complex, containing only TatA subunits. Substrates initially bind to the TatABC complex, which probably triggers association of the separate TatA complex to form the active translocon.

Its subcellular location is the cell membrane. Functionally, part of the twin-arginine translocation (Tat) system that transports large folded proteins containing a characteristic twin-arginine motif in their signal peptide across membranes. TatA could form the protein-conducting channel of the Tat system. The protein is Sec-independent protein translocase protein TatA of Corynebacterium efficiens (strain DSM 44549 / YS-314 / AJ 12310 / JCM 11189 / NBRC 100395).